We begin with the raw amino-acid sequence, 545 residues long: Chaperonin GroEL 2 (545 aa).

Residues 29-32 (TLGP), 86-90 (DGTTT), G413, 479-481 (NAA), and D495 contribute to the ATP site.

Belongs to the chaperonin (HSP60) family. Forms a cylinder of 14 subunits composed of two heptameric rings stacked back-to-back. Interacts with the co-chaperonin GroES.

It is found in the cytoplasm. The catalysed reaction is ATP + H2O + a folded polypeptide = ADP + phosphate + an unfolded polypeptide.. Its function is as follows. Together with its co-chaperonin GroES, plays an essential role in assisting protein folding. The GroEL-GroES system forms a nano-cage that allows encapsulation of the non-native substrate proteins and provides a physical environment optimized to promote and accelerate protein folding. This is Chaperonin GroEL 2 from Prochlorococcus marinus (strain AS9601).